A 452-amino-acid chain; its full sequence is MEDLVLDNNTKNIYNKRFFISTWGCQMNEEDSEKISGLLKGIGYTRTDIRDEADVVIFNTCCVRENAEQKVYGHLGELKALKRKNPNLILIVTGCMMQQKGMPEKVMEKFPHVDIIAGTYNSYKLPEYIERVKTEGNSIIEIWDKEKGIVEGLPVDRKSDIKAFVTIMYGCNNFCSYCIVPYVRGRERSRDPQNIIDEIKDLVSKGYKEITLLGQNVNSYGKGLEPEINFATLLRMVNKIDGLERIRFMTSHPKDVSDELIKAMAECEKVCEQGHFALQSGSTEILQKMNRKYTREDYLTLVKKLRKAMPNVGISTDIIIGYPGETEKDFEDTLSIVKEIEFDSAFTFIYSKREGTPAAKLEDQVPEDVKHTRFNKLVEAVNEIMARKNKEFEGKTVEVLVEGPSKNDDTKLMGRTRSGKLVNFNGCLDQVGKLVNIKITKANSFSLTGEII.

In terms of domain architecture, MTTase N-terminal spans 16–134 (KRFFISTWGC…LPEYIERVKT (119 aa)). [4Fe-4S] cluster is bound by residues cysteine 25, cysteine 61, cysteine 95, cysteine 171, cysteine 175, and cysteine 178. Residues 157 to 387 (RKSDIKAFVT…VEAVNEIMAR (231 aa)) form the Radical SAM core domain. The region spanning 390 to 452 (KEFEGKTVEV…NSFSLTGEII (63 aa)) is the TRAM domain.

The protein belongs to the methylthiotransferase family. MiaB subfamily. In terms of assembly, monomer. Requires [4Fe-4S] cluster as cofactor.

It localises to the cytoplasm. The enzyme catalyses N(6)-dimethylallyladenosine(37) in tRNA + (sulfur carrier)-SH + AH2 + 2 S-adenosyl-L-methionine = 2-methylsulfanyl-N(6)-dimethylallyladenosine(37) in tRNA + (sulfur carrier)-H + 5'-deoxyadenosine + L-methionine + A + S-adenosyl-L-homocysteine + 2 H(+). Catalyzes the methylthiolation of N6-(dimethylallyl)adenosine (i(6)A), leading to the formation of 2-methylthio-N6-(dimethylallyl)adenosine (ms(2)i(6)A) at position 37 in tRNAs that read codons beginning with uridine. This chain is tRNA-2-methylthio-N(6)-dimethylallyladenosine synthase, found in Clostridium novyi (strain NT).